The primary structure comprises 302 residues: Chloramphenicol resistance protein (302 aa).

The protein resides in the cell membrane. In terms of biological role, this protein is thought to be a membrane-associated barrier of drug uptake. In Escherichia coli, this protein is Chloramphenicol resistance protein (cml).